Reading from the N-terminus, the 350-residue chain is Glycogenin-1 (350 aa).

Residue Thr2 is modified to N-acetylthreonine. 4 residues coordinate UDP: Leu9, Thr11, Asn12, and Tyr15. UDP-alpha-D-glucose-binding residues include Leu9, Thr11, Asn12, and Tyr15. Ser44 is subject to Phosphoserine. Arg77 contributes to the UDP binding site. UDP-alpha-D-glucose-binding residues include Arg77, Lys86, Asp102, Ala103, Asp104, Asn133, Ser134, Asp160, Asp163, and Gln164. UDP is bound by residues Asp102, Ala103, and Asp104. Residue Asp102 participates in Mn(2+) binding. Asp104 contacts Mn(2+). Residue Tyr195 is glycosylated (O-linked (Glc...) tyrosine). Positions 212, 215, and 218 each coordinate UDP. His212 contacts Mn(2+). Positions 215 and 218 each coordinate UDP-alpha-D-glucose. The tract at residues 301 to 333 is interaction with GYS1; it reads SHLSLGEIPAMAQPFVSSEERKERWEQGQADYM.

Belongs to the glycosyltransferase 8 family. Glycogenin subfamily. As to quaternary structure, part of the GYS1-GYG1 complex, a heterooctamer composed of a tetramer of GYS1 and 2 dimers of GYG1, where each GYS1 protomer binds to one GYG1 subunit (via GYG1 C-terminus); the GYS1 tetramer may dissociate from GYG1 dimers to continue glycogen polymerization on its own. May also form a heterooctamer complex with GYS2 (via GYG1 C-terminus). Requires Mn(2+) as cofactor. Post-translationally, self-glycosylated by the transfer of glucose residues from UDP-glucose to itself, forming an alpha-1,4-glycan of around 10 residues attached to Tyr-195. In terms of processing, phosphorylated. Highly expressed in skeletal muscle and heart, with lower levels in brain, lung, kidney and pancreas.

Its subcellular location is the cytoplasm. It localises to the nucleus. It carries out the reaction L-tyrosyl-[glycogenin] + UDP-alpha-D-glucose = alpha-D-glucosyl-L-tyrosyl-[glycogenin] + UDP + H(+). The enzyme catalyses [1,4-alpha-D-glucosyl](n)-L-tyrosyl-[glycogenin] + UDP-alpha-D-glucose = [1,4-alpha-D-glucosyl](n+1)-L-tyrosyl-[glycogenin] + UDP + H(+). Its pathway is glycan biosynthesis; glycogen biosynthesis. Inhibited by palladium ions. Its function is as follows. Glycogenin participates in the glycogen biosynthetic process along with glycogen synthase and glycogen branching enzyme. It catalyzes the formation of a short alpha (1,4)-glucosyl chain covalently attached via a glucose 1-O-tyrosyl linkage to internal tyrosine residues and these chains act as primers for the elongation reaction catalyzed by glycogen synthase. The sequence is that of Glycogenin-1 from Homo sapiens (Human).